Consider the following 259-residue polypeptide: Ribosomal RNA small subunit methyltransferase J (259 aa).

S-adenosyl-L-methionine-binding positions include 101–102, 117–118, 153–154, and Asp-176; these read RD, ER, and SS.

It belongs to the methyltransferase superfamily. RsmJ family.

Its subcellular location is the cytoplasm. The enzyme catalyses guanosine(1516) in 16S rRNA + S-adenosyl-L-methionine = N(2)-methylguanosine(1516) in 16S rRNA + S-adenosyl-L-homocysteine + H(+). Functionally, specifically methylates the guanosine in position 1516 of 16S rRNA. This Vibrio vulnificus (strain YJ016) protein is Ribosomal RNA small subunit methyltransferase J.